Here is a 517-residue protein sequence, read N- to C-terminus: Tyrosine 3-monooxygenase (517 aa).

Ser33 carries the post-translational modification Phosphoserine; by PKA. Residues His345, His350, and Glu390 each contribute to the Fe cation site.

Belongs to the biopterin-dependent aromatic amino acid hydroxylase family. The cofactor is Fe(2+).

The protein localises to the cytoplasm. Its subcellular location is the perinuclear region. The protein resides in the cell projection. It localises to the axon. The catalysed reaction is (6R)-L-erythro-5,6,7,8-tetrahydrobiopterin + L-tyrosine + O2 = (4aS,6R)-4a-hydroxy-L-erythro-5,6,7,8-tetrahydrobiopterin + L-dopa. Its pathway is catecholamine biosynthesis; dopamine biosynthesis; dopamine from L-tyrosine: step 1/2. Its activity is regulated as follows. Phosphorylation leads to an increase in the catalytic activity. Its function is as follows. Involved in the synthesis of catecholamines, such as dopamine. Has a role in serotonin signaling. Required for normal explorative and foraging behavior. The polypeptide is Tyrosine 3-monooxygenase (cat-2) (Caenorhabditis briggsae).